Here is a 1207-residue protein sequence, read N- to C-terminus: DNA-directed RNA polymerase subunit beta' (1207 aa).

Cys-60, Cys-62, Cys-75, and Cys-78 together coordinate Zn(2+). Residues Asp-450, Asp-452, and Asp-454 each contribute to the Mg(2+) site. Zn(2+) is bound by residues Cys-818, Cys-892, Cys-899, and Cys-902.

It belongs to the RNA polymerase beta' chain family. The RNAP catalytic core consists of 2 alpha, 1 beta, 1 beta' and 1 omega subunit. When a sigma factor is associated with the core the holoenzyme is formed, which can initiate transcription. Mg(2+) serves as cofactor. The cofactor is Zn(2+).

It catalyses the reaction RNA(n) + a ribonucleoside 5'-triphosphate = RNA(n+1) + diphosphate. Its function is as follows. DNA-dependent RNA polymerase catalyzes the transcription of DNA into RNA using the four ribonucleoside triphosphates as substrates. This is DNA-directed RNA polymerase subunit beta' from Lactococcus lactis subsp. cremoris (strain SK11).